The primary structure comprises 507 residues: MFS transporter fsa7 (507 aa).

Residues methionine 1–tryptophan 65 are disordered. Asparagine 64 is a glycosylation site (N-linked (GlcNAc...) asparagine). The chain crosses the membrane as a helical span at residues leucine 72 to alanine 92. N-linked (GlcNAc...) asparagine glycosylation is present at asparagine 106. 5 consecutive transmembrane segments (helical) span residues alanine 111 to leucine 131, phenylalanine 146 to valine 166, isoleucine 169 to leucine 189, alanine 200 to valine 220, and tryptophan 228 to methionine 248. Asparagine 252 is a glycosylation site (N-linked (GlcNAc...) asparagine). The next 6 helical transmembrane spans lie at proline 302–phenylalanine 322, glycine 341–leucine 361, leucine 379–threonine 399, tryptophan 406–proline 426, isoleucine 429–leucine 449, and glycine 472–phenylalanine 492.

Belongs to the major facilitator superfamily.

Its subcellular location is the cell membrane. Its function is as follows. Efflux pump that might be required for efficient secretion of fusarisetin A or other secondary metabolies produced by the fusarisetin A gene cluster. This Fusarium sp. (strain FN080326) protein is MFS transporter fsa7.